The chain runs to 343 residues: Type II restriction enzyme BsuMI component YdiS (343 aa).

In terms of assembly, bsuMI restriction activity requires YdiR, YdiS and YdjA.

The enzyme catalyses Endonucleolytic cleavage of DNA to give specific double-stranded fragments with terminal 5'-phosphates.. A P subtype restriction enzyme that recognizes the double-stranded sequence 5'-CTCGAG-3'; the cleavage site is unknown. In Bacillus subtilis (strain 168), this protein is Type II restriction enzyme BsuMI component YdiS (ydiS).